The following is a 400-amino-acid chain: Succinate--glutarate CoA-transferase (400 aa).

The active-site Nucleophile is Asp181.

The protein belongs to the CoA-transferase III family.

It catalyses the reaction glutarate + succinyl-CoA = glutaryl-CoA + succinate. The protein operates within amino-acid degradation. Its pathway is cofactor biosynthesis; biotin biosynthesis. Its function is as follows. Is involved in L-lysine degradation and provides glutaryl-CoA for biotin synthesis. Catalyzes the conversion of glutarate to glutaryl-CoA via the transfer of CoA from succinyl-CoA. This is Succinate--glutarate CoA-transferase from Agrobacterium fabrum (strain C58 / ATCC 33970) (Agrobacterium tumefaciens (strain C58)).